The following is a 22-amino-acid chain: Mu-conotoxin SxIIIA (22 aa).

3 disulfide bridges follow: Cys-2/Cys-15, Cys-3/Cys-20, and Cys-10/Cys-21. Position 22 is an alanine amide (Ala-22).

This sequence belongs to the conotoxin M superfamily. As to expression, expressed by the venom duct.

It localises to the secreted. In terms of biological role, mu-conotoxins block voltage-gated sodium channels (Nav). This synthetic toxin potently blocks rNav1.4/SCN4A (IC(50)= 7 nM). It also moderately blocks rNav1.1/SCN1A (IC(50)=370 nM), rNav1.2/SCN2A (IC(50)=1 uM), and mNav1.6/SCN6A (IC(50)=570 nM). It is noteworthy that coexpression of subunits beta-2 or beta-4 (but not beta-1 or beta-3) decrease by more that 10-fold the binding potency of the toxin to rNav1.6. It is also noteworthy that the toxin is 50-fold more potent on mouse Nav1.6 than on rat Nav1.6. In vivo, when injected intraperitoneally or subcutaneously in mice, causes motor impairment, paralysis and death. In Conus striolatus (Cone snail), this protein is Mu-conotoxin SxIIIA.